Reading from the N-terminus, the 353-residue chain is Photosystem II protein D1 (353 aa).

At Thr-2 the chain carries N-acetylthreonine. Position 2 is a phosphothreonine (Thr-2). The next 3 helical transmembrane spans lie at 29-46 (YVGWFGVIMIPTLLTAVS), 118-133 (HFFLGICCYMGREWEL), and 142-156 (WIAVAYSAPVAAATA). A chlorophyll a-binding site is contributed by His-118. Position 126 (Tyr-126) interacts with pheophytin a. Asp-170 and Glu-189 together coordinate [CaMn4O5] cluster. The chain crosses the membrane as a helical span at residues 197–218 (FHMLGVAGVFGGSLFSAMHGSL). Residue His-198 coordinates chlorophyll a. A quinone-binding positions include His-215 and 264–265 (SF). His-215 contacts Fe cation. His-272 contacts Fe cation. A helical transmembrane segment spans residues 274–288 (FLAAWPVVGIWFTAL). The [CaMn4O5] cluster site is built by His-332, Glu-333, Asp-342, and Ala-344. The propeptide occupies 345-353 (SVEAPSING).

This sequence belongs to the reaction center PufL/M/PsbA/D family. PSII is composed of 1 copy each of membrane proteins PsbA, PsbB, PsbC, PsbD, PsbE, PsbF, PsbH, PsbI, PsbJ, PsbK, PsbL, PsbM, PsbT, PsbX, PsbY, PsbZ, Psb30/Ycf12, at least 3 peripheral proteins of the oxygen-evolving complex and a large number of cofactors. It forms dimeric complexes. Requires The D1/D2 heterodimer binds P680, chlorophylls that are the primary electron donor of PSII, and subsequent electron acceptors. It shares a non-heme iron and each subunit binds pheophytin, quinone, additional chlorophylls, carotenoids and lipids. D1 provides most of the ligands for the Mn4-Ca-O5 cluster of the oxygen-evolving complex (OEC). There is also a Cl(-1) ion associated with D1 and D2, which is required for oxygen evolution. The PSII complex binds additional chlorophylls, carotenoids and specific lipids. as cofactor. Post-translationally, tyr-161 forms a radical intermediate that is referred to as redox-active TyrZ, YZ or Y-Z. C-terminally processed by CTPA; processing is essential to allow assembly of the oxygen-evolving complex and thus photosynthetic growth.

The protein localises to the plastid. It localises to the chloroplast thylakoid membrane. The enzyme catalyses 2 a plastoquinone + 4 hnu + 2 H2O = 2 a plastoquinol + O2. Its function is as follows. Photosystem II (PSII) is a light-driven water:plastoquinone oxidoreductase that uses light energy to abstract electrons from H(2)O, generating O(2) and a proton gradient subsequently used for ATP formation. It consists of a core antenna complex that captures photons, and an electron transfer chain that converts photonic excitation into a charge separation. The D1/D2 (PsbA/PsbD) reaction center heterodimer binds P680, the primary electron donor of PSII as well as several subsequent electron acceptors. This chain is Photosystem II protein D1, found in Tupiella akineta (Green alga).